A 552-amino-acid polypeptide reads, in one-letter code: Probable glucomannan 4-beta-mannosyltransferase 10 (552 aa).

The chain crosses the membrane as a helical span at residues 62–82 (IVPLFKCLVAFCLIISLLVFI). Asp161 is an active-site residue. Positions 220 and 222 each coordinate substrate. Residue Asp314 is part of the active site. Helical transmembrane passes span 393–413 (IIVH…SVFF), 430–450 (ITLC…FWIL), 509–529 (EIMV…FGNT), and 530–550 (LLYL…VGFV).

This sequence belongs to the glycosyltransferase 2 family. Plant cellulose synthase-like A subfamily.

It localises to the golgi apparatus membrane. The enzyme catalyses GDP-mannose + (glucomannan)n = GDP + (glucomannan)n+1.. In terms of biological role, probable mannan synthase which consists of a 4-beta-mannosyltransferase activity on mannan using GDP-mannose. The beta-1,4-mannan product is the backbone for galactomannan synthesis by galactomannan galactosyltransferase. Galactomannan is a noncellulosic polysaccharides of plant cell wall. The sequence is that of Probable glucomannan 4-beta-mannosyltransferase 10 from Arabidopsis thaliana (Mouse-ear cress).